We begin with the raw amino-acid sequence, 652 residues long: MSVTESKAKTERKSSRKPAKTQETVLSALLAQTEEVSVPLASLIKSPLNVRTVPYSAESVSELADSIKGVGLLQNLVVHALPGDRYGVAAGGRRLAALNMLAERDIIQVDWPVRVKVIPQELATAASMTENGHRRDMHPAEQIAGFRAMAQEGKTPAQIGDLLGYSPRHVQRMLKLADLAPVILDALAEDRITTEHCQALALENDTARQVQVFEAACQSGWGGKPDVRVIRNLITESEVAVKDNTKFRFVGADAFSPDELRTDLFSDDEGGYVDCVALDAALLEKLQAVAEHLREAEGWEWCAGRMEPVGECREDSRAYRNLPEPEAVLTEAEEERLNELMMRYDALENQCEESDLLAAEMKLIDCMAKVRAWTPEMRAGSGVVVSWRYGNVCVQRGVQLRSEDDVTDDADRTEQVQEKASVEEISLPLLTKMSSERTLAVQAALMQQPDKSLALLTWTLCLNVFGSGAYSKPAQISLECKHYSLTSDAPSGKEGAAFMALMAEKARLVVLLPEGWSRDMTTFLSLSQEVLLSLLSFCTACSIHGVQTRECGHTSRSPLDPLETAIGFHMRDWWQPTKANFFGHLKKPQIIAALNEAGLSGAARDAEKMKKGDAAEHAEFHMKDNRWVPGWMCAPRPQTDATERTDNLADAA.

A compositionally biased stretch (basic and acidic residues) spans 1 to 13 (MSVTESKAKTERK). Positions 1 to 21 (MSVTESKAKTERKSSRKPAKT) are disordered.

It belongs to the ParB family.

This is an uncharacterized protein from Escherichia coli (strain K12).